The chain runs to 418 residues: Secreted aspartic protease 6 (418 aa).

Residues 1-18 form the signal peptide; sequence MFLKNILSVLRFALLIDA. The propeptide at 19–76 is activation peptide; that stretch reads APVKRSPGFVTLDFNVKRSLVVPDDPTAESKRSPLFLDLDPTQIPVDDTGRNVGVDKR. The Peptidase A1 domain occupies 90 to 404; that stretch reads YSADITVGSN…DLDDKKISMA (315 aa). The active site involves Asp-108. 108 to 110 lines the pepstatin A pocket; sequence DTG. Cys-123 and Cys-135 are joined by a disulfide. An N-linked (GlcNAc...) asparagine glycan is attached at Asn-138. Asp-268 lines the Zn(2+) pocket. Asp-294 is an active-site residue. Position 294–298 (294–298) interacts with pepstatin A; it reads DSGTT. Cys-332 and Cys-370 are disulfide-bonded.

The protein belongs to the peptidase A1 family.

It localises to the secreted. The enzyme catalyses Preferential cleavage at the carboxyl of hydrophobic amino acids, but fails to cleave 15-Leu-|-Tyr-16, 16-Tyr-|-Leu-17 and 24-Phe-|-Phe-25 of insulin B chain. Activates trypsinogen, and degrades keratin.. With respect to regulation, inhibited by pepstatin A analogs. Its function is as follows. Secreted aspartic peptidases (SAPs) are a group of ten acidic hydrolases considered as key virulence factors. These enzymes supply the fungus with nutrient amino acids as well as are able to degrade the selected host's proteins involved in the immune defense. Moreover, acts toward human hemoglobin though limited proteolysis to generate a variety of antimicrobial hemocidins, enabling to compete with the other microorganisms of the same physiological niche using the microbicidal peptides generated from the host protein. In Candida albicans (Yeast), this protein is Secreted aspartic protease 6.